The sequence spans 433 residues: Protein translocase subunit SecD (433 aa).

The next 6 membrane-spanning stretches (helical) occupy residues 7 to 27 (LAFL…GPKI), 257 to 277 (LIAG…AYRM), 278 to 298 (AGLI…LTFA), 300 to 320 (LHVV…GIAV), 354 to 374 (TIVD…IFGG), and 380 to 400 (GFAV…VLFA).

It belongs to the SecD/SecF family. SecD subfamily. As to quaternary structure, forms a complex with SecF. Part of the essential Sec protein translocation apparatus which comprises SecA, SecYEG and auxiliary proteins SecDF. Other proteins may also be involved.

Its subcellular location is the cell membrane. Functionally, part of the Sec protein translocase complex. Interacts with the SecYEG preprotein conducting channel. SecDF uses the proton motive force (PMF) to complete protein translocation after the ATP-dependent function of SecA. This Alicyclobacillus acidocaldarius subsp. acidocaldarius (strain ATCC 27009 / DSM 446 / BCRC 14685 / JCM 5260 / KCTC 1825 / NBRC 15652 / NCIMB 11725 / NRRL B-14509 / 104-IA) (Bacillus acidocaldarius) protein is Protein translocase subunit SecD.